The sequence spans 205 residues: High frequency lysogenization protein HflD homolog (205 aa).

It belongs to the HflD family.

It localises to the cytoplasm. The protein resides in the cell inner membrane. The protein is High frequency lysogenization protein HflD homolog of Haemophilus influenzae (strain PittEE).